We begin with the raw amino-acid sequence, 133 residues long: Secretin (133 aa).

The first 22 residues, 1 to 22, serve as a signal peptide directing secretion; that stretch reads MEPPLPTPMLLLLLLLLSSSAA. A propeptide spanning residues 23 to 30 is cleaved from the precursor; it reads LPAPPRTP. A Valine amide modification is found at Val-58. The residue at position 62 (Ser-62) is a Phosphoserine. The propeptide occupies 62-133; that stretch reads SEQDTENIPE…EWTETTRPPR (72 aa).

It belongs to the glucagon family. Highly expressed in the intestine. Also expressed in the hippocampus, cerebellum and the brain stem in adult mouse brain. In the hippocampus, expressed in the dentate gyrus, the hilus and the molecular layer.

The protein localises to the secreted. Hormone involved in different processes, such as regulation of the pH of the duodenal content, food intake and water homeostasis. Exerts its biological effects by binding to secretin receptor (SCTR), a G-protein coupled receptor expressed in the basolateral domain of several cells. Acts as a key gastrointestinal hormone by regulating the pH of the duodenal content. Secreted by S cells of the duodenum in the crypts of Lieberkuehn and regulates the pH of the duodenum by (1) inhibiting the secretion of gastric acid from the parietal cells of the stomach and (2) stimulating the production of bicarbonate (NaHCO(3)) from the ductal cells of the pancreas. Production of bicarbonate is essential to neutralize the pH and ensure no damage is done to the small intestine by the gastric acid. In addition to regulating the pH of the duodenal content, plays a central role in diet induced thermogenesis: acts as a non-sympathetic brown fat (BAT) activator mediating prandial thermogenesis, which consequentially induces satiation. Mechanistically, secretin released by the gut after a meal binds to secretin receptor (SCTR) in brown adipocytes, activating brown fat thermogenesis by stimulating lipolysis, which is sensed in the brain and promotes satiation. Also able to stimulate lipolysis in white adipocytes. Also plays an important role in cellular osmoregulation: released into the systemic circulation in response to hyperosmolality and acts at different levels in the hypothalamus, pituitary and kidney to regulate water homeostasis. Also plays a role in the central nervous system, possibly by acting as a neuropeptide hormone: required for hippocampal synaptic function and neural progenitor cells maintenance. In Mus musculus (Mouse), this protein is Secretin.